We begin with the raw amino-acid sequence, 638 residues long: Phosphomethylpyrimidine synthase (638 aa).

Substrate-binding positions include N236, M265, Y294, H330, 350 to 352, 391 to 394, and E430; these read SRG and DGLR. Zn(2+) is bound at residue H434. Position 457 (Y457) interacts with substrate. H498 is a Zn(2+) binding site. Residues C578, C581, and C586 each contribute to the [4Fe-4S] cluster site.

The protein belongs to the ThiC family. As to quaternary structure, homodimer. Requires [4Fe-4S] cluster as cofactor.

It carries out the reaction 5-amino-1-(5-phospho-beta-D-ribosyl)imidazole + S-adenosyl-L-methionine = 4-amino-2-methyl-5-(phosphooxymethyl)pyrimidine + CO + 5'-deoxyadenosine + formate + L-methionine + 3 H(+). It functions in the pathway cofactor biosynthesis; thiamine diphosphate biosynthesis. Functionally, catalyzes the synthesis of the hydroxymethylpyrimidine phosphate (HMP-P) moiety of thiamine from aminoimidazole ribotide (AIR) in a radical S-adenosyl-L-methionine (SAM)-dependent reaction. In Polaromonas sp. (strain JS666 / ATCC BAA-500), this protein is Phosphomethylpyrimidine synthase.